Reading from the N-terminus, the 279-residue chain is Undecaprenyl-diphosphatase (279 aa).

6 helical membrane-spanning segments follow: residues 45-65 (FVEM…IVIY), 85-105 (WQLW…ALPF), 113-133 (FNFM…FIWV), 188-208 (SVAA…YSGL), 226-246 (LILL…IRFL), and 255-275 (FTIF…YWLV).

Belongs to the UppP family.

It localises to the cell membrane. It catalyses the reaction di-trans,octa-cis-undecaprenyl diphosphate + H2O = di-trans,octa-cis-undecaprenyl phosphate + phosphate + H(+). Its function is as follows. Catalyzes the dephosphorylation of undecaprenyl diphosphate (UPP). Confers resistance to bacitracin. The chain is Undecaprenyl-diphosphatase from Streptococcus agalactiae serotype Ia (strain ATCC 27591 / A909 / CDC SS700).